The following is a 154-amino-acid chain: Ribonuclease H (154 aa).

Residues 1-142 (MTKQVEIFTD…CDELARQGAN (142 aa)) enclose the RNase H type-1 domain. 4 residues coordinate Mg(2+): Asp10, Glu48, Asp70, and Asp134.

It belongs to the RNase H family. In terms of assembly, monomer. Requires Mg(2+) as cofactor.

The protein resides in the cytoplasm. The catalysed reaction is Endonucleolytic cleavage to 5'-phosphomonoester.. Its function is as follows. Endonuclease that specifically degrades the RNA of RNA-DNA hybrids. This Yersinia pestis bv. Antiqua (strain Antiqua) protein is Ribonuclease H.